The primary structure comprises 352 residues: Histidinol-phosphate aminotransferase (352 aa).

Lys216 bears the N6-(pyridoxal phosphate)lysine mark.

The protein belongs to the class-II pyridoxal-phosphate-dependent aminotransferase family. Histidinol-phosphate aminotransferase subfamily. Pyridoxal 5'-phosphate is required as a cofactor.

The catalysed reaction is L-histidinol phosphate + 2-oxoglutarate = 3-(imidazol-4-yl)-2-oxopropyl phosphate + L-glutamate. The protein operates within amino-acid biosynthesis; L-histidine biosynthesis; L-histidine from 5-phospho-alpha-D-ribose 1-diphosphate: step 7/9. This is Histidinol-phosphate aminotransferase from Methanoculleus marisnigri (strain ATCC 35101 / DSM 1498 / JR1).